Consider the following 54-residue polypeptide: Small ribosomal subunit protein uS14 (54 aa).

The Zn(2+) site is built by cysteine 19, cysteine 22, cysteine 37, and cysteine 40.

The protein belongs to the universal ribosomal protein uS14 family. Zinc-binding uS14 subfamily. In terms of assembly, part of the 30S ribosomal subunit. Requires Zn(2+) as cofactor.

In terms of biological role, binds 16S rRNA, required for the assembly of 30S particles. The sequence is that of Small ribosomal subunit protein uS14 from Sulfurisphaera tokodaii (strain DSM 16993 / JCM 10545 / NBRC 100140 / 7) (Sulfolobus tokodaii).